Consider the following 105-residue polypeptide: MHIKKGDNVKVIAGKDKGKEGKVIATLPKKDRVVVEGVNIMKKHQKPTQLNPEGGILETEAAIHVSNVQLLDPKTNEPTRVGYKFVDGKKVRIAKKSGEEIKSNN.

The protein belongs to the universal ribosomal protein uL24 family. Part of the 50S ribosomal subunit.

Functionally, one of two assembly initiator proteins, it binds directly to the 5'-end of the 23S rRNA, where it nucleates assembly of the 50S subunit. In terms of biological role, one of the proteins that surrounds the polypeptide exit tunnel on the outside of the subunit. In Staphylococcus aureus (strain Mu3 / ATCC 700698), this protein is Large ribosomal subunit protein uL24.